We begin with the raw amino-acid sequence, 347 residues long: Probable dual-specificity RNA methyltransferase RlmN (347 aa).

Glutamate 90 acts as the Proton acceptor in catalysis. Positions 96-326 constitute a Radical SAM core domain; it reads YKHGNSICIS…VTVRREMGSD (231 aa). A disulfide bridge links cysteine 103 with cysteine 331. [4Fe-4S] cluster contacts are provided by cysteine 110, cysteine 114, and cysteine 117. Residues 157 to 158, serine 189, 212 to 214, and asparagine 288 each bind S-adenosyl-L-methionine; these read GE and SLH. The active-site S-methylcysteine intermediate is cysteine 331.

It belongs to the radical SAM superfamily. RlmN family. [4Fe-4S] cluster serves as cofactor.

The protein resides in the cytoplasm. The catalysed reaction is adenosine(2503) in 23S rRNA + 2 reduced [2Fe-2S]-[ferredoxin] + 2 S-adenosyl-L-methionine = 2-methyladenosine(2503) in 23S rRNA + 5'-deoxyadenosine + L-methionine + 2 oxidized [2Fe-2S]-[ferredoxin] + S-adenosyl-L-homocysteine. It catalyses the reaction adenosine(37) in tRNA + 2 reduced [2Fe-2S]-[ferredoxin] + 2 S-adenosyl-L-methionine = 2-methyladenosine(37) in tRNA + 5'-deoxyadenosine + L-methionine + 2 oxidized [2Fe-2S]-[ferredoxin] + S-adenosyl-L-homocysteine. Specifically methylates position 2 of adenine 2503 in 23S rRNA and position 2 of adenine 37 in tRNAs. The sequence is that of Probable dual-specificity RNA methyltransferase RlmN from Clostridium botulinum (strain Alaska E43 / Type E3).